The chain runs to 147 residues: Large ribosomal subunit protein uL22c (147 aa).

It belongs to the universal ribosomal protein uL22 family. In terms of assembly, part of the 50S ribosomal subunit.

It is found in the plastid. Its function is as follows. This protein binds specifically to 23S rRNA. Functionally, the globular domain of the protein is located near the polypeptide exit tunnel on the outside of the subunit, while an extended beta-hairpin is found that lines the wall of the exit tunnel in the center of the 70S ribosome. The sequence is that of Large ribosomal subunit protein uL22c (rpl22) from Cuscuta obtusiflora (Peruvian dodder).